The following is a 160-amino-acid chain: MSDNDDIEVESDEEQPRFQSAADKRAHHNALERKRRDHIKDSFHSLRDSVPSLQGEKASRAQILDKATEYIQYMRRKNHTHQQDIDDLKRQNALLEQQVRALEKARSSAQLQTNYPSSDNSLYTNAKGSTISAFDGGSDSSSESEPEEPQSRKKLRMEAS.

The segment covering 1–13 (MSDNDDIEVESDE) has biased composition (acidic residues). The disordered stretch occupies residues 1-40 (MSDNDDIEVESDEEQPRFQSAADKRAHHNALERKRRDHIK). S2 is modified (N-acetylserine). S2 and S11 each carry phosphoserine. The region spanning 23–74 (DKRAHHNALERKRRDHIKDSFHSLRDSVPSLQGEKASRAQILDKATEYIQYM) is the bHLH domain. Residues 29-40 (NALERKRRDHIK) show a composition bias toward basic and acidic residues. K66 is modified (N6-acetyllysine). The segment at 81-102 (HQQDIDDLKRQNALLEQQVRAL) is leucine-zipper. Residues 103-160 (EKARSSAQLQTNYPSSDNSLYTNAKGSTISAFDGGSDSSSESEPEEPQSRKKLRMEAS) form a disordered region. S107 bears the Phosphoserine mark. The segment covering 107–132 (SSAQLQTNYPSSDNSLYTNAKGSTIS) has biased composition (polar residues). Positions 152–156 (RKKLR) match the Nuclear localization signal motif. K153 and K154 each carry N6-acetyllysine.

Belongs to the MAX family. As to quaternary structure, efficient DNA binding requires dimerization with another bHLH protein. Binds DNA as a heterodimer with MYC or MAD. Part of the E2F6.com-1 complex in G0 phase composed of E2F6, MGA, MAX, TFDP1, CBX3, BAT8, EUHMTASE1, RING1, RNF2, MBLR, L3MBTL2 and YAF2. Component of some MLL1/MLL complex, at least composed of the core components KMT2A/MLL1, ASH2L, HCFC1/HCF1, WDR5 and RBBP5, as well as the facultative components BACC1, CHD8, E2F6, HSP70, INO80C, KANSL1, LAS1L, MAX, MCRS1, MGA, MYST1/MOF, PELP1, PHF20, PRP31, RING2, RUVB1/TIP49A, RUVB2/TIP49B, SENP3, TAF1, TAF4, TAF6, TAF7, TAF9 and TEX10. Interacts with SPAG9. The heterodimer MYC:MAX interacts with ABI1; the interaction may enhance MYC:MAX transcriptional activity. Reversible lysine acetylation might regulate the nuclear-cytoplasmic shuttling of specific Max complexes. High levels found in the brain, heart and lung while lower levels are seen in the liver, kidney and skeletal muscle.

It localises to the nucleus. It is found in the cell projection. Its subcellular location is the dendrite. In terms of biological role, transcription regulator. Forms a sequence-specific DNA-binding protein complex with MYC or MAD which recognizes the core sequence 5'-CAC[GA]TG-3'. The MYC:MAX complex is a transcriptional activator, whereas the MAD:MAX complex is a repressor. May repress transcription via the recruitment of a chromatin remodeling complex containing H3 'Lys-9' histone methyltransferase activity. Represses MYC transcriptional activity from E-box elements. This chain is Protein max, found in Homo sapiens (Human).